We begin with the raw amino-acid sequence, 461 residues long: MQSIILIGKPNVGKSSLFNRLARKRIAITSDISGTTRDTNKIEVQIDGKKALLIDSGGLDESNELFKNVKANSLKAAKNSDIIFYMVDGKFLPDDEDKAFFYEMKKLNKPIALVINKIDNKKDEERSWEFSNFGVKEVFNISVTHNIGIDELCMWASKFLNENFLDADDEEDFESYLENFDENSGDFKLKTINENHIKVGIIGRVNVGKSSLLNALVKEERSVVSDIAGTTIDPVNESIMHKDKIIEFVDTAGIRKRGKIQGLERYALNRTEYALTNAQIALLVLDAAEGFNELDERIAGLAAKHCLGVIIVLNKWDKSELDFDKTLKELKLDRFKFLAYAPVISVSALSGKRVHVLLDKILEVFANFTQKIPTAKLNALVEEATRAHPLPHDYGKLVKIYYAVQYDLAPPKIALIMNRPKALHFSYKRYLQNQIRKQFNFEGVPLIIVSRKKGSKDEQEG.

2 EngA-type G domains span residues 2-164 (QSII…NENF) and 197-369 (IKVG…ANFT). GTP contacts are provided by residues 8–15 (GKPNVGKS), 55–59 (DSGGL), 116–119 (NKID), 203–210 (GRVNVGKS), 250–254 (DTAGI), and 314–317 (NKWD). The KH-like domain maps to 370 to 454 (QKIPTAKLNA…PLIIVSRKKG (85 aa)).

This sequence belongs to the TRAFAC class TrmE-Era-EngA-EngB-Septin-like GTPase superfamily. EngA (Der) GTPase family. In terms of assembly, associates with the 50S ribosomal subunit.

Its function is as follows. GTPase that plays an essential role in the late steps of ribosome biogenesis. This Campylobacter lari (strain RM2100 / D67 / ATCC BAA-1060) protein is GTPase Der.